A 153-amino-acid polypeptide reads, in one-letter code: Aspartate carbamoyltransferase regulatory chain (153 aa).

Residues Cys109, Cys114, Cys138, and Cys141 each coordinate Zn(2+).

The protein belongs to the PyrI family. In terms of assembly, contains catalytic and regulatory chains. Zn(2+) serves as cofactor.

Its function is as follows. Involved in allosteric regulation of aspartate carbamoyltransferase. The polypeptide is Aspartate carbamoyltransferase regulatory chain (Vibrio vulnificus (strain YJ016)).